The chain runs to 181 residues: Inner membrane-spanning protein YciB (181 aa).

5 helical membrane-spanning segments follow: residues 10-30 (LIIFFAVYKFFDIYVASGALI), 50-70 (MHLITFVMVTVFGSLTLILHD), 72-92 (SFIKWKVTIVYALFAIALGVS), 118-138 (VTWYWVSFFVVCGLVNIYVAF), and 148-168 (FKVFGLTALTLINTVLTVLYL).

Belongs to the YciB family.

It localises to the cell inner membrane. Plays a role in cell envelope biogenesis, maintenance of cell envelope integrity and membrane homeostasis. The polypeptide is Inner membrane-spanning protein YciB (Shewanella halifaxensis (strain HAW-EB4)).